The chain runs to 410 residues: Imidazolonepropionase (410 aa).

His-73 and His-75 together coordinate Fe(3+). Zn(2+)-binding residues include His-73 and His-75. Positions 82, 145, and 178 each coordinate 4-imidazolone-5-propanoate. Position 145 (Tyr-145) interacts with N-formimidoyl-L-glutamate. Residue His-243 participates in Fe(3+) binding. A Zn(2+)-binding site is contributed by His-243. Gln-246 is a binding site for 4-imidazolone-5-propanoate. Asp-318 lines the Fe(3+) pocket. Residue Asp-318 coordinates Zn(2+). Asn-320 and Gly-322 together coordinate N-formimidoyl-L-glutamate. 4-imidazolone-5-propanoate is bound at residue Ser-323.

Belongs to the metallo-dependent hydrolases superfamily. HutI family. Zn(2+) serves as cofactor. Fe(3+) is required as a cofactor.

It is found in the cytoplasm. The catalysed reaction is 4-imidazolone-5-propanoate + H2O = N-formimidoyl-L-glutamate. It participates in amino-acid degradation; L-histidine degradation into L-glutamate; N-formimidoyl-L-glutamate from L-histidine: step 3/3. In terms of biological role, catalyzes the hydrolytic cleavage of the carbon-nitrogen bond in imidazolone-5-propanoate to yield N-formimidoyl-L-glutamate. It is the third step in the universal histidine degradation pathway. The polypeptide is Imidazolonepropionase (Shewanella baltica (strain OS223)).